The chain runs to 500 residues: GTPase Der (500 aa).

2 consecutive EngA-type G domains span residues 3–166 (PVVA…MEEL) and 211–384 (IKLA…VSAT). Residues 9–16 (GRPNVGKS), 56–60 (DTGGI), 118–121 (NKID), 217–224 (GRPNVGKS), 264–268 (DTAGV), and 329–332 (NKWD) each bind GTP. In terms of domain architecture, KH-like spans 385 to 469 (KRVGTSVLTR…PIRIQFQNSE (85 aa)). The interval 468-500 (SENPFEDRGGKLTMSQERQRKRLLGAVKNRNKK) is disordered. Basic residues predominate over residues 486–500 (QRKRLLGAVKNRNKK).

This sequence belongs to the TRAFAC class TrmE-Era-EngA-EngB-Septin-like GTPase superfamily. EngA (Der) GTPase family. Associates with the 50S ribosomal subunit.

Its function is as follows. GTPase that plays an essential role in the late steps of ribosome biogenesis. In Aliivibrio fischeri (strain ATCC 700601 / ES114) (Vibrio fischeri), this protein is GTPase Der.